A 260-amino-acid chain; its full sequence is Protein-L-isoaspartate O-methyltransferase (260 aa).

The disordered stretch occupies residues 1–27 (MKSPVAGAVLDPSTPPPTTGTSWRWPG). Serine 92 is a catalytic residue.

It belongs to the methyltransferase superfamily. L-isoaspartyl/D-aspartyl protein methyltransferase family.

The protein resides in the cytoplasm. It catalyses the reaction [protein]-L-isoaspartate + S-adenosyl-L-methionine = [protein]-L-isoaspartate alpha-methyl ester + S-adenosyl-L-homocysteine. In terms of biological role, catalyzes the methyl esterification of L-isoaspartyl residues in peptides and proteins that result from spontaneous decomposition of normal L-aspartyl and L-asparaginyl residues. It plays a role in the repair and/or degradation of damaged proteins. In Aeropyrum pernix (strain ATCC 700893 / DSM 11879 / JCM 9820 / NBRC 100138 / K1), this protein is Protein-L-isoaspartate O-methyltransferase (pcm).